Reading from the N-terminus, the 260-residue chain is Ribonuclease HII (260 aa).

The RNase H type-2 domain maps to 71 to 259 (RRIAGIDEAG…VREVLKASEQ (189 aa)). A divalent metal cation contacts are provided by aspartate 77, glutamate 78, and aspartate 169.

This sequence belongs to the RNase HII family. The cofactor is Mn(2+). Mg(2+) is required as a cofactor.

The protein localises to the cytoplasm. The enzyme catalyses Endonucleolytic cleavage to 5'-phosphomonoester.. Endonuclease that specifically degrades the RNA of RNA-DNA hybrids. This Geobacillus kaustophilus (strain HTA426) protein is Ribonuclease HII.